An 85-amino-acid chain; its full sequence is Large ribosomal subunit protein bL27 (85 aa).

Residues 1 to 26 are disordered; it reads MAHKKGVGSSRNGRDSNPKMLGVKRF.

Belongs to the bacterial ribosomal protein bL27 family.

In Roseiflexus sp. (strain RS-1), this protein is Large ribosomal subunit protein bL27.